Reading from the N-terminus, the 337-residue chain is Inositol 2-dehydrogenase (337 aa).

Belongs to the Gfo/Idh/MocA family. In terms of assembly, homotetramer.

It catalyses the reaction myo-inositol + NAD(+) = scyllo-inosose + NADH + H(+). Its function is as follows. Involved in the oxidation of myo-inositol (MI) to 2-keto-myo-inositol (2KMI or 2-inosose). The chain is Inositol 2-dehydrogenase from Burkholderia ambifaria (strain MC40-6).